A 498-amino-acid polypeptide reads, in one-letter code: Galactose-1-phosphate uridylyltransferase (498 aa).

Belongs to the galactose-1-phosphate uridylyltransferase type 2 family.

The protein resides in the cytoplasm. It catalyses the reaction alpha-D-galactose 1-phosphate + UDP-alpha-D-glucose = alpha-D-glucose 1-phosphate + UDP-alpha-D-galactose. Its pathway is carbohydrate metabolism; galactose metabolism. This chain is Galactose-1-phosphate uridylyltransferase, found in Clostridium perfringens (strain SM101 / Type A).